Consider the following 162-residue polypeptide: NADH-quinone oxidoreductase subunit I (162 aa).

2 4Fe-4S ferredoxin-type domains span residues 53–83 (LRRY…IEAE) and 93–122 (TRYD…EGPN). [4Fe-4S] cluster contacts are provided by C63, C66, C69, C73, C102, C105, C108, and C112.

Belongs to the complex I 23 kDa subunit family. In terms of assembly, NDH-1 is composed of 14 different subunits. Subunits NuoA, H, J, K, L, M, N constitute the membrane sector of the complex. Requires [4Fe-4S] cluster as cofactor.

The protein resides in the cell inner membrane. The catalysed reaction is a quinone + NADH + 5 H(+)(in) = a quinol + NAD(+) + 4 H(+)(out). In terms of biological role, NDH-1 shuttles electrons from NADH, via FMN and iron-sulfur (Fe-S) centers, to quinones in the respiratory chain. The immediate electron acceptor for the enzyme in this species is believed to be ubiquinone. Couples the redox reaction to proton translocation (for every two electrons transferred, four hydrogen ions are translocated across the cytoplasmic membrane), and thus conserves the redox energy in a proton gradient. In Maricaulis maris (strain MCS10) (Caulobacter maris), this protein is NADH-quinone oxidoreductase subunit I.